The chain runs to 117 residues: Protein Wnt-6 (117 aa).

Residue S1 is the site of O-palmitoleoyl serine; by PORCN attachment. A disulfide bond links C83 and C98. N84 carries an N-linked (GlcNAc...) asparagine glycan.

Belongs to the Wnt family. Post-translationally, palmitoleoylation is required for efficient binding to frizzled receptors. Depalmitoleoylation leads to Wnt signaling pathway inhibition.

Its subcellular location is the secreted. The protein resides in the extracellular space. It localises to the extracellular matrix. Functionally, ligand for members of the frizzled family of seven transmembrane receptors. Probable developmental protein. May be a signaling molecule which affects the development of discrete regions of tissues. Is likely to signal over only few cell diameters. The polypeptide is Protein Wnt-6 (WNT-6) (Evasterias troschelii (Mottled sea star)).